The following is a 191-amino-acid chain: MALNGPQKTVVQLVSVVVVMGGLAWASVPFYDWFCRVTGFGGATGVAEAGSDTILDKTIKVRFDASKERGMPWEFRPVQTEMELRIGETGLAFYEAYNPTDRPVAGQASYNVAPYSAGGYFDKIACFCFEEQVLQPGERVQMPVTFFVDPEIVNDRDAKYVHTITLSYTFYEIDLPEGYAALDAGEKTNTN.

Residues 1–9 (MALNGPQKT) lie on the Cytoplasmic side of the membrane. Residues 10–30 (VVQLVSVVVVMGGLAWASVPF) traverse the membrane as a helical; Signal-anchor for type II membrane protein segment. The Periplasmic segment spans residues 31–191 (YDWFCRVTGF…LDAGEKTNTN (161 aa)).

This sequence belongs to the COX11/CtaG family.

The protein localises to the cell inner membrane. Exerts its effect at some terminal stage of cytochrome c oxidase synthesis, probably by being involved in the insertion of the copper B into subunit I. This Ruegeria pomeroyi (strain ATCC 700808 / DSM 15171 / DSS-3) (Silicibacter pomeroyi) protein is Cytochrome c oxidase assembly protein CtaG.